The sequence spans 853 residues: G-type lectin S-receptor-like serine/threonine-protein kinase SRK (853 aa).

A signal peptide spans 1-31 (MRGELPNKHHSYTFFVFLFFFLILFPDLSIS). The Extracellular segment spans residues 32 to 441 (VNTLSATESL…FGERRTIRGK (410 aa)). One can recognise a Bulb-type lectin domain in the interval 34 to 154 (TLSATESLTI…KINESDEFLW (121 aa)). Asn46, Asn120, Asn147, and Asn243 each carry an N-linked (GlcNAc...) asparagine glycan. The EGF-like; atypical domain occupies 293-329 (PKDTCDLYGICGPYAYCDMSTSPTCNCIKGFQPLSPQ). Cystine bridges form between Cys297/Cys309, Cys303/Cys317, Cys378/Cys403, and Cys382/Cys388. One can recognise a PAN domain in the interval 348-428 (CGEDRFFRLM…DGQDLFVRLA (81 aa)). An N-linked (GlcNAc...) asparagine glycan is attached at Asn387. Residues 442–462 (IIGLIIGISLMLVLSFIIYCF) traverse the membrane as a helical segment. Over 463–853 (WKKKQKRARA…QITVSVINAR (391 aa)) the chain is Cytoplasmic. In terms of domain architecture, Protein kinase spans 524–802 (FSDSNILGRG…PKMSSVVLML (279 aa)). ATP is bound by residues 530–538 (LGRGGFGIV) and Lys552. Ser558 carries the phosphoserine modification. Residues 613-631 (TQSSNKLNWQTRFSIINGI) form a caM-binding region. Asp650 serves as the catalytic Proton acceptor. A phosphoserine mark is found at Ser654 and Ser667. Thr684 is modified (phosphothreonine). Residues 807 to 838 (GEIPQPKRPGYCVGRSSLDTADSSSSTKRDSE) form a disordered region. Over residues 822 to 832 (SSLDTADSSSS) the composition is skewed to low complexity. A Phosphoserine modification is found at Ser831.

The protein belongs to the protein kinase superfamily. Ser/Thr protein kinase family.

It is found in the cell membrane. It carries out the reaction L-seryl-[protein] + ATP = O-phospho-L-seryl-[protein] + ADP + H(+). The enzyme catalyses L-threonyl-[protein] + ATP = O-phospho-L-threonyl-[protein] + ADP + H(+). Functionally, female specificity determinant of self-incompatibility. This Arabidopsis thaliana (Mouse-ear cress) protein is G-type lectin S-receptor-like serine/threonine-protein kinase SRK (SRK).